The primary structure comprises 278 residues: Ribosomal RNA small subunit methyltransferase A (278 aa).

S-adenosyl-L-methionine is bound by residues Asn28, Leu30, Gly55, Glu77, Asp103, and Asn122.

Belongs to the class I-like SAM-binding methyltransferase superfamily. rRNA adenine N(6)-methyltransferase family. RsmA subfamily.

Its subcellular location is the cytoplasm. The catalysed reaction is adenosine(1518)/adenosine(1519) in 16S rRNA + 4 S-adenosyl-L-methionine = N(6)-dimethyladenosine(1518)/N(6)-dimethyladenosine(1519) in 16S rRNA + 4 S-adenosyl-L-homocysteine + 4 H(+). Functionally, specifically dimethylates two adjacent adenosines (A1518 and A1519) in the loop of a conserved hairpin near the 3'-end of 16S rRNA in the 30S particle. May play a critical role in biogenesis of 30S subunits. This Cereibacter sphaeroides (strain ATCC 17025 / ATH 2.4.3) (Rhodobacter sphaeroides) protein is Ribosomal RNA small subunit methyltransferase A.